A 69-amino-acid polypeptide reads, in one-letter code: Putative membrane protein insertion efficiency factor (69 aa).

It belongs to the UPF0161 family.

It is found in the cell membrane. Functionally, could be involved in insertion of integral membrane proteins into the membrane. The chain is Putative membrane protein insertion efficiency factor from Caldanaerobacter subterraneus subsp. tengcongensis (strain DSM 15242 / JCM 11007 / NBRC 100824 / MB4) (Thermoanaerobacter tengcongensis).